We begin with the raw amino-acid sequence, 568 residues long: Urease subunit alpha (568 aa).

The Urease domain occupies 130–568; that stretch reads GGIDTHIHFI…LPMAQRYFLF (439 aa). Ni(2+) contacts are provided by His-135, His-137, and Lys-218. Lys-218 is modified (N6-carboxylysine). Substrate is bound at residue His-220. The Ni(2+) site is built by His-247 and His-273. His-321 functions as the Proton donor in the catalytic mechanism. Asp-361 contacts Ni(2+).

Belongs to the metallo-dependent hydrolases superfamily. Urease alpha subunit family. In terms of assembly, heterotrimer of UreA (gamma), UreB (beta) and UreC (alpha) subunits. Three heterotrimers associate to form the active enzyme. Requires Ni cation as cofactor. In terms of processing, carboxylation allows a single lysine to coordinate two nickel ions.

The protein resides in the cytoplasm. The enzyme catalyses urea + 2 H2O + H(+) = hydrogencarbonate + 2 NH4(+). It functions in the pathway nitrogen metabolism; urea degradation; CO(2) and NH(3) from urea (urease route): step 1/1. The polypeptide is Urease subunit alpha (Burkholderia pseudomallei (strain 1106a)).